We begin with the raw amino-acid sequence, 465 residues long: Cysteine--tRNA ligase (465 aa).

Residue Cys27 coordinates Zn(2+). The 'HIGH' region motif lies at 29-39 (PTVYDDAHLGH). Cys207, His237, and Glu241 together coordinate Zn(2+). The short motif at 269 to 273 (KMSKS) is the 'KMSKS' region element. Lys272 is an ATP binding site.

It belongs to the class-I aminoacyl-tRNA synthetase family. As to quaternary structure, monomer. The cofactor is Zn(2+).

It is found in the cytoplasm. The catalysed reaction is tRNA(Cys) + L-cysteine + ATP = L-cysteinyl-tRNA(Cys) + AMP + diphosphate. In Helicobacter pylori (strain G27), this protein is Cysteine--tRNA ligase.